Here is a 403-residue protein sequence, read N- to C-terminus: Metacaspase-1A (403 aa).

The interval 1 to 93 is disordered; that stretch reads MQHHHHSSYG…PPTDPVAFGH (93 aa). Positions 18-31 are enriched in low complexity; it reads GQAYRQQQPYYGQP. Residues 32–55 are compositionally biased toward pro residues; sequence SPQPYAQPPPPNYQRPSGYGPPPS. Active-site residues include His-194 and Cys-250.

The protein belongs to the peptidase C14B family.

Its function is as follows. Involved in cell death (apoptosis). The polypeptide is Metacaspase-1A (casA) (Aspergillus terreus (strain NIH 2624 / FGSC A1156)).